The following is a 410-amino-acid chain: Pyruvate dehydrogenase complex protein X component, mitochondrial (410 aa).

The transit peptide at 1-30 (MLSAISKVSTLKSCTRYLTKCNYHASAKLL) directs the protein to the mitochondrion. Residues 32–108 (VKTFSMPAMS…DVGEPIAYIA (77 aa)) enclose the Lipoyl-binding domain. N6-lipoyllysine is present on lysine 73. The Peripheral subunit-binding (PSBD) domain occupies 169–210 (TLLPSVSLLLAENNISKQKALKEIAPSGSNGRLLKGDVLAYL).

Belongs to the 2-oxoacid dehydrogenase family. As to quaternary structure, eukaryotic pyruvate dehydrogenase (PDH) complexes are organized as a core consisting of the oligomeric dihydrolipoamide acetyl-transferase (E2), around which are arranged multiple copies of pyruvate dehydrogenase (E1), dihydrolipoamide dehydrogenase (E3) and protein X (E3BP) bound by non-covalent bonds.

The protein resides in the mitochondrion matrix. Required for anchoring dihydrolipoamide dehydrogenase (E3) to the dihydrolipoamide transacetylase (E2) core of the pyruvate dehydrogenase complexes of eukaryotes. This specific binding is essential for a functional PDH complex. The protein is Pyruvate dehydrogenase complex protein X component, mitochondrial (PDX1) of Saccharomyces cerevisiae (strain ATCC 204508 / S288c) (Baker's yeast).